Consider the following 50-residue polypeptide: Small ribosomal subunit protein eS31 (50 aa).

4 residues coordinate Zn(2+): Cys-22, Cys-25, Cys-40, and Cys-43. The C4-type zinc-finger motif lies at 22-43; sequence CPRCGPGVFMADHGDRWACGKC.

The protein belongs to the eukaryotic ribosomal protein eS31 family. In terms of assembly, part of the 30S ribosomal subunit. Zn(2+) serves as cofactor.

In Pyrococcus furiosus (strain ATCC 43587 / DSM 3638 / JCM 8422 / Vc1), this protein is Small ribosomal subunit protein eS31.